A 440-amino-acid chain; its full sequence is GTPase Der (440 aa).

EngA-type G domains lie at 4–168 and 177–352; these read PIVA…PENK and IKVA…NQRA. GTP is bound by residues 10–17, 57–61, 120–123, 183–190, 230–234, and 295–298; these read GRPNVGKS, DTGGI, NKVD, GKPNVGKS, DTAGL, and NKWD. The region spanning 353–437 is the KH-like domain; that stretch reads MRVPTGGLNE…PIRFIYREKS (85 aa).

It belongs to the TRAFAC class TrmE-Era-EngA-EngB-Septin-like GTPase superfamily. EngA (Der) GTPase family. As to quaternary structure, associates with the 50S ribosomal subunit.

Functionally, GTPase that plays an essential role in the late steps of ribosome biogenesis. The protein is GTPase Der of Alkaliphilus metalliredigens (strain QYMF).